A 185-amino-acid chain; its full sequence is UPF0669 protein C6orf120 homolog (185 aa).

Positions 1–23 (MAARWRRILIVFVAAQVLCLVNT) are cleaved as a signal peptide. A glycan (N-linked (GlcNAc...) asparagine) is linked at N47.

Belongs to the UPF0669 family.

The protein localises to the secreted. The protein is UPF0669 protein C6orf120 homolog of Gallus gallus (Chicken).